A 590-amino-acid polypeptide reads, in one-letter code: Nuclear receptor subfamily 2 group C member 1 (590 aa).

Positions 1 to 166 (MATIEEIAHQ…RLQRCIAFGM (166 aa)) are required for interaction with KAT2B. Positions 98–173 (FDLCVVCGDK…FGMKQDSVQC (76 aa)) form a DNA-binding region, nuclear receptor. NR C4-type zinc fingers lie at residues 101-121 (CVVC…CEGC) and 137-156 (CRGS…CQYC). 2 positions are modified to phosphoserine: serine 185 and serine 203. A Phosphothreonine modification is found at threonine 208. Threonine 210 is subject to Phosphothreonine; by MAPK1. Residue lysine 238 forms a Glycyl lysine isopeptide (Lys-Gly) (interchain with G-Cter in SUMO); alternate linkage. Lysine 238 participates in a covalent cross-link: Glycyl lysine isopeptide (Lys-Gly) (interchain with G-Cter in SUMO2); alternate. Positions 333–577 (ESMEGSTHLI…SVIPHILKME (245 aa)) constitute an NR LBD domain. Serine 568 is modified (phosphoserine; by PKC). A required for interaction with NRIP1 region spans residues 571–590 (PHILKMEPADYNSQIIGHSL). Lysine 575 participates in a covalent cross-link: Glycyl lysine isopeptide (Lys-Gly) (interchain with G-Cter in SUMO2).

The protein belongs to the nuclear hormone receptor family. NR2 subfamily. Homodimer. Heterodimer; with NR2C2 which is required for chromatin remodeling and for binding to promoter regions such as globin DR1 repeats. Interacts with ESR1; the interaction prevents homodimerization of ESR1 and suppresses its transcriptional activity and cell growth. Interacts with NRIP1 (via its LXXLL motifs); the interaction provides corepressor activity. Interacts with HDAC3 (via the DNA-binding domain); the interaction recruits phosphorylated NR2C1 to PML bodies for sumoylation. Interacts with HDAC4 (via the DNA-binding domain). Interacts with PIAS1; the interaction is required for sumoylation of NR2C1. Interacts with UBE2I; the interaction is required for sumoylation of NR2C1. Interacts with KAT2B; the interaction acts as a corepressor of gene expression. Post-translationally, sumoylation requires both PIAS1 and UBE2I. Sumoylation appears to dissociate NR2C1 from the PML nuclear bodies. Enhances the interaction with NRIP1 but inhibits interaction with KAT2B. In proliferating cells, stimulation by all-trans retinoic acid, activation of MAPK1-mediated phosphorylation and recruitment to PML bodies with subsequent sumoylation, suppresses OCT4 expression. In terms of processing, phosphorylated on several serine and threonine residues. Phosphorylation on Thr-210, stimulated by all-trans retinoic acid (atRA) mediates PML location and sumoylation in proliferating cells which then modulates its association with effector molecules, KAT2B and NRIP1. Phosphorylation on Ser-568 by PKC is important for protein stability and function as activator of RARB.

It is found in the nucleus. It localises to the PML body. Its function is as follows. Orphan nuclear receptor. Binds the IR7 element in the promoter of its own gene in an autoregulatory negative feedback mechanism. Primarily repressor of a broad range of genes including ESR1 and RARB. Together with NR2C2, forms the core of the DRED (direct repeat erythroid-definitive) complex that represses embryonic and fetal globin transcription. Binds to hormone response elements (HREs) consisting of two 5'-AGGTCA-3' half site direct repeat consensus sequences. Also activator of OCT4 gene expression. Plays a fundamental role in early embryogenesis and regulates embryonic stem cell proliferation and differentiation. Mediator of retinoic acid-regulated preadipocyte proliferation. The polypeptide is Nuclear receptor subfamily 2 group C member 1 (Nr2c1) (Rattus norvegicus (Rat)).